The primary structure comprises 245 residues: Protein mlo1 (245 aa).

In terms of domain architecture, SAP spans 4 to 38; that stretch reads YKSLKVAELREKLAEKGLSTAGNKAELVSRLTAAT. The disordered stretch occupies residues 32–245; it reads SRLTAATESN…AERFGVAAKN (214 aa). Residues 37–52 show a composition bias toward low complexity; the sequence is ATESNDENTSNNNATD. Residues 58–70 show a composition bias toward acidic residues; the sequence is PPEDDIDWGDMEN. Over residues 109-118 the composition is skewed to polar residues; the sequence is TSQAPETSTG. Residues 119–130 show a composition bias toward basic and acidic residues; it reads AEEHQETTEESK. Position 139 is a phosphoserine (Ser139). Over residues 182 to 196 the composition is skewed to low complexity; it reads SSNNKNHNQSKNPQN.

The protein belongs to the SAP domain-containing ribonucleoprotein family.

The sequence is that of Protein mlo1 (mlo1) from Schizosaccharomyces pombe (strain 972 / ATCC 24843) (Fission yeast).